Reading from the N-terminus, the 365-residue chain is Mannonate dehydratase 1 (365 aa).

It belongs to the mannonate dehydratase family. The cofactor is Fe(2+). Requires Mn(2+) as cofactor.

The catalysed reaction is D-mannonate = 2-dehydro-3-deoxy-D-gluconate + H2O. Its pathway is carbohydrate metabolism; pentose and glucuronate interconversion. Functionally, catalyzes the dehydration of D-mannonate. In Bacillus licheniformis (strain ATCC 14580 / DSM 13 / JCM 2505 / CCUG 7422 / NBRC 12200 / NCIMB 9375 / NCTC 10341 / NRRL NRS-1264 / Gibson 46), this protein is Mannonate dehydratase 1.